The chain runs to 417 residues: Serine hydroxymethyltransferase (417 aa).

(6S)-5,6,7,8-tetrahydrofolate contacts are provided by residues L121 and 125–127 (GHL). K229 bears the N6-(pyridoxal phosphate)lysine mark. 354 to 356 (SPF) lines the (6S)-5,6,7,8-tetrahydrofolate pocket.

It belongs to the SHMT family. As to quaternary structure, homodimer. It depends on pyridoxal 5'-phosphate as a cofactor.

The protein localises to the cytoplasm. The catalysed reaction is (6R)-5,10-methylene-5,6,7,8-tetrahydrofolate + glycine + H2O = (6S)-5,6,7,8-tetrahydrofolate + L-serine. The protein operates within one-carbon metabolism; tetrahydrofolate interconversion. It participates in amino-acid biosynthesis; glycine biosynthesis; glycine from L-serine: step 1/1. Its function is as follows. Catalyzes the reversible interconversion of serine and glycine with tetrahydrofolate (THF) serving as the one-carbon carrier. This reaction serves as the major source of one-carbon groups required for the biosynthesis of purines, thymidylate, methionine, and other important biomolecules. Also exhibits THF-independent aldolase activity toward beta-hydroxyamino acids, producing glycine and aldehydes, via a retro-aldol mechanism. This Dichelobacter nodosus (strain VCS1703A) protein is Serine hydroxymethyltransferase.